The sequence spans 174 residues: Gamma-crystallin D (174 aa).

Beta/gamma crystallin 'Greek key' domains lie at 2–40 (GKITLYEDRGFQGRHYECSSDHPNLQPYLSRCNSARVDS) and 41–83 (GCWM…RLIP). Residues 84 to 87 (HSGS) form a connecting peptide region. 2 consecutive Beta/gamma crystallin 'Greek key' domains span residues 88–128 (HRIR…NVLE) and 129–171 (GSWV…RRVI).

It belongs to the beta/gamma-crystallin family. As to quaternary structure, monomer.

In terms of biological role, crystallins are the dominant structural components of the vertebrate eye lens. In Homo sapiens (Human), this protein is Gamma-crystallin D (CRYGD).